Consider the following 390-residue polypeptide: Lipid-A-disaccharide synthase (390 aa).

It belongs to the LpxB family.

It catalyses the reaction a lipid X + a UDP-2-N,3-O-bis[(3R)-3-hydroxyacyl]-alpha-D-glucosamine = a lipid A disaccharide + UDP + H(+). It participates in bacterial outer membrane biogenesis; LPS lipid A biosynthesis. In terms of biological role, condensation of UDP-2,3-diacylglucosamine and 2,3-diacylglucosamine-1-phosphate to form lipid A disaccharide, a precursor of lipid A, a phosphorylated glycolipid that anchors the lipopolysaccharide to the outer membrane of the cell. The protein is Lipid-A-disaccharide synthase of Rickettsia felis (strain ATCC VR-1525 / URRWXCal2) (Rickettsia azadi).